Consider the following 344-residue polypeptide: Small ribosomal subunit protein mS38 (344 aa).

3 disordered regions span residues 1 to 27 (MIPQ…ASSA), 43 to 101 (ALQK…SVPS), and 325 to 344 (KKYK…QDRL). The span at 51-74 (SSKPSSPDDGSSRAFAARASVPAA) shows a compositional bias: low complexity. A compositionally biased stretch (basic residues) spans 325–338 (KKYKKLMRRTRNER).

The protein belongs to the mitochondrion-specific ribosomal protein mS38 family. In terms of assembly, component of the mitochondrial small ribosomal subunit (mt-SSU). Mature N.crassa 74S mitochondrial ribosomes consist of a small (37S) and a large (54S) subunit. The 37S small subunit contains a 16S ribosomal RNA (16S mt-rRNA) and 32 different proteins. The 54S large subunit contains a 23S rRNA (23S mt-rRNA) and 42 different proteins.

The protein localises to the mitochondrion. Component of the mitochondrial ribosome (mitoribosome), a dedicated translation machinery responsible for the synthesis of mitochondrial genome-encoded proteins, including at least some of the essential transmembrane subunits of the mitochondrial respiratory chain. The mitoribosomes are attached to the mitochondrial inner membrane and translation products are cotranslationally integrated into the membrane. The sequence is that of Small ribosomal subunit protein mS38 (cox24) from Neurospora crassa (strain ATCC 24698 / 74-OR23-1A / CBS 708.71 / DSM 1257 / FGSC 987).